The following is a 334-amino-acid chain: Holliday junction branch migration complex subunit RuvB (334 aa).

The large ATPase domain (RuvB-L) stretch occupies residues A4–Y184. Residues I23, R24, G65, K68, T69, T70, E131 to Y133, R174, Y184, and R221 each bind ATP. Position 69 (T69) interacts with Mg(2+). The tract at residues Q185–N255 is small ATPAse domain (RuvB-S). Residues A258–E334 are head domain (RuvB-H). DNA is bound by residues R294, R313, and R318.

It belongs to the RuvB family. Homohexamer. Forms an RuvA(8)-RuvB(12)-Holliday junction (HJ) complex. HJ DNA is sandwiched between 2 RuvA tetramers; dsDNA enters through RuvA and exits via RuvB. An RuvB hexamer assembles on each DNA strand where it exits the tetramer. Each RuvB hexamer is contacted by two RuvA subunits (via domain III) on 2 adjacent RuvB subunits; this complex drives branch migration. In the full resolvosome a probable DNA-RuvA(4)-RuvB(12)-RuvC(2) complex forms which resolves the HJ.

Its subcellular location is the cytoplasm. It catalyses the reaction ATP + H2O = ADP + phosphate + H(+). Its function is as follows. The RuvA-RuvB-RuvC complex processes Holliday junction (HJ) DNA during genetic recombination and DNA repair, while the RuvA-RuvB complex plays an important role in the rescue of blocked DNA replication forks via replication fork reversal (RFR). RuvA specifically binds to HJ cruciform DNA, conferring on it an open structure. The RuvB hexamer acts as an ATP-dependent pump, pulling dsDNA into and through the RuvAB complex. RuvB forms 2 homohexamers on either side of HJ DNA bound by 1 or 2 RuvA tetramers; 4 subunits per hexamer contact DNA at a time. Coordinated motions by a converter formed by DNA-disengaged RuvB subunits stimulates ATP hydrolysis and nucleotide exchange. Immobilization of the converter enables RuvB to convert the ATP-contained energy into a lever motion, pulling 2 nucleotides of DNA out of the RuvA tetramer per ATP hydrolyzed, thus driving DNA branch migration. The RuvB motors rotate together with the DNA substrate, which together with the progressing nucleotide cycle form the mechanistic basis for DNA recombination by continuous HJ branch migration. Branch migration allows RuvC to scan DNA until it finds its consensus sequence, where it cleaves and resolves cruciform DNA. This chain is Holliday junction branch migration complex subunit RuvB, found in Serratia proteamaculans (strain 568).